The sequence spans 514 residues: ATP synthase subunit alpha (514 aa).

170–177 (GDRQTGKT) contacts ATP.

Belongs to the ATPase alpha/beta chains family. In terms of assembly, F-type ATPases have 2 components, CF(1) - the catalytic core - and CF(0) - the membrane proton channel. CF(1) has five subunits: alpha(3), beta(3), gamma(1), delta(1), epsilon(1). CF(0) has three main subunits: a(1), b(2) and c(9-12). The alpha and beta chains form an alternating ring which encloses part of the gamma chain. CF(1) is attached to CF(0) by a central stalk formed by the gamma and epsilon chains, while a peripheral stalk is formed by the delta and b chains.

Its subcellular location is the cell inner membrane. It carries out the reaction ATP + H2O + 4 H(+)(in) = ADP + phosphate + 5 H(+)(out). Functionally, produces ATP from ADP in the presence of a proton gradient across the membrane. The alpha chain is a regulatory subunit. This is ATP synthase subunit alpha from Psychrobacter cryohalolentis (strain ATCC BAA-1226 / DSM 17306 / VKM B-2378 / K5).